We begin with the raw amino-acid sequence, 381 residues long: Pulmonary surfactant-associated protein B (381 aa).

A signal peptide spans 1-24; that stretch reads MAESHLLQWLLLLLPTLCGPGTAA. Positions 25–65 constitute a Saposin A-type domain; that stretch reads WTTSSLACAQGPEFWCQSLEQALQCRALGHCLQEVWGHVGA. A propeptide spanning residues 25–200 is cleaved from the precursor; sequence WTTSSLACAQ…PHTQDLSEQQ (176 aa). 3 consecutive Saposin B-type domains span residues 65–147, 204–281, and 295–370; these read ADDL…KSRQ, PLPY…SMDD, and RDSE…GTMS. Disulfide bonds link Cys69–Cys143, Cys72–Cys137, Cys100–Cys112, Cys208–Cys277, Cys211–Cys271, Cys235–Cys246, Cys299–Cys366, Cys302–Cys360, and Cys325–Cys335. Residue Asn129 is glycosylated (N-linked (GlcNAc...) asparagine). Positions 280 to 381 are excised as a propeptide; that stretch reads DDSAGPRSPT…PLQCIHSPDL (102 aa). A glycan (N-linked (GlcNAc...) asparagine) is linked at Asn311.

Homodimer; disulfide-linked.

The protein resides in the secreted. The protein localises to the extracellular space. It localises to the surface film. In terms of biological role, pulmonary surfactant-associated proteins promote alveolar stability by lowering the surface tension at the air-liquid interface in the peripheral air spaces. SP-B increases the collapse pressure of palmitic acid to nearly 70 millinewtons per meter. The polypeptide is Pulmonary surfactant-associated protein B (SFTPB) (Homo sapiens (Human)).